The following is a 331-amino-acid chain: Probable allantoicase (331 aa).

It belongs to the allantoicase family.

It catalyses the reaction allantoate + H2O = (S)-ureidoglycolate + urea. It participates in nitrogen metabolism; (S)-allantoin degradation; (S)-ureidoglycolate from allantoate (aminidohydrolase route): step 1/1. The chain is Probable allantoicase from Pseudomonas savastanoi pv. phaseolicola (strain 1448A / Race 6) (Pseudomonas syringae pv. phaseolicola (strain 1448A / Race 6)).